Here is a 309-residue protein sequence, read N- to C-terminus: Palmitoyltransferase ZDHHC19 (309 aa).

Transmembrane regions (helical) follow at residues 29–49 and 59–79; these read LFAAFNVVLLVFFSGLFFAFP and WAFPVITGSLFVLTFFSLVSL. The DHHC domain maps to 112 to 162; sequence QWCPKCCFHRPPRTYHCPWCNICVEDFDHHCKWVNNCIGHRNFRFFMLLVL. The active-site S-palmitoyl cysteine intermediate is the cysteine 142. The next 2 membrane-spanning stretches (helical) occupy residues 160–180 and 193–213; these read LVLSLCLYSGAMLVTCLIFLV and IAIVVAVSAAGLLVPLSLLLL. Residues 280 to 294 show a composition bias toward pro residues; the sequence is LHPPMSPSALNPPAP. The segment at 280 to 309 is disordered; sequence LHPPMSPSALNPPAPTSGSLQSREGTPGAW.

Belongs to the DHHC palmitoyltransferase family.

It localises to the golgi apparatus membrane. The protein localises to the cytoplasm. Its subcellular location is the perinuclear region. It carries out the reaction L-cysteinyl-[protein] + hexadecanoyl-CoA = S-hexadecanoyl-L-cysteinyl-[protein] + CoA. In terms of biological role, palmitoyltransferase that mediates palmitoylation oproteins, such as RRAS and SQSTM1. Catalyzes palmitoylation of RRAS, leading to increased cell viability. Acts as a positive regulator of autophagy by mediating palmitoylation of SQSTM1, promoting affinity between SQSTM1 and ATG8 proteins and recruitment of ubiquitinated cargo proteins to autophagosomes. (Microbial infection) Promotes Chikungunya virus (CHIKV) replication by mediating viral nsp1 palmitoylation. The chain is Palmitoyltransferase ZDHHC19 from Homo sapiens (Human).